We begin with the raw amino-acid sequence, 271 residues long: Putative glucose-6-phosphate 1-epimerase (271 aa).

Positions 71 and 93 each coordinate substrate. The active site involves H151. Residue D193 coordinates substrate. E249 is a catalytic residue.

The protein belongs to the glucose-6-phosphate 1-epimerase family.

It catalyses the reaction alpha-D-glucose 6-phosphate = beta-D-glucose 6-phosphate. The polypeptide is Putative glucose-6-phosphate 1-epimerase (Haemophilus influenzae (strain ATCC 51907 / DSM 11121 / KW20 / Rd)).